Consider the following 195-residue polypeptide: Ureidoglycolate lyase (195 aa).

This sequence belongs to the ureidoglycolate lyase family. In terms of assembly, homodimer.

It catalyses the reaction (S)-ureidoglycolate = urea + glyoxylate. Its pathway is nitrogen metabolism; (S)-allantoin degradation. In terms of biological role, catalyzes the catabolism of the allantoin degradation intermediate (S)-ureidoglycolate, generating urea and glyoxylate. Involved in the utilization of allantoin as secondary nitrogen source when primary sources are limiting. This Saccharomyces cerevisiae (strain ATCC 204508 / S288c) (Baker's yeast) protein is Ureidoglycolate lyase (DAL3).